Here is a 179-residue protein sequence, read N- to C-terminus: IMPACT family member in pol 5'region (179 aa).

The protein belongs to the IMPACT family.

The protein is IMPACT family member in pol 5'region of Thermus thermophilus.